The chain runs to 135 residues: Fluoride-specific ion channel FluC (135 aa).

4 helical membrane passes run 12–32 (FLVIGLGAAFGAWTRWLLGLS), 42–62 (LGTLAANVIGGYLVGVAVGIF), 70–90 (LAWKLFAITGFLGGLTTFSTF), and 106–126 (AIGLASVHLAGSLTATYLGLL). The Na(+) site is built by G82 and T85.

It belongs to the fluoride channel Fluc/FEX (TC 1.A.43) family.

The protein resides in the cell inner membrane. It carries out the reaction fluoride(in) = fluoride(out). With respect to regulation, na(+) is not transported, but it plays an essential structural role and its presence is essential for fluoride channel function. In terms of biological role, fluoride-specific ion channel. Important for reducing fluoride concentration in the cell, thus reducing its toxicity. The chain is Fluoride-specific ion channel FluC from Dechloromonas aromatica (strain RCB).